We begin with the raw amino-acid sequence, 145 residues long: D-aminoacyl-tRNA deacylase (145 aa).

Positions 137-138 (GP) match the Gly-cisPro motif, important for rejection of L-amino acids motif.

Belongs to the DTD family. In terms of assembly, homodimer.

Its subcellular location is the cytoplasm. The catalysed reaction is glycyl-tRNA(Ala) + H2O = tRNA(Ala) + glycine + H(+). It catalyses the reaction a D-aminoacyl-tRNA + H2O = a tRNA + a D-alpha-amino acid + H(+). An aminoacyl-tRNA editing enzyme that deacylates mischarged D-aminoacyl-tRNAs. Also deacylates mischarged glycyl-tRNA(Ala), protecting cells against glycine mischarging by AlaRS. Acts via tRNA-based rather than protein-based catalysis; rejects L-amino acids rather than detecting D-amino acids in the active site. By recycling D-aminoacyl-tRNA to D-amino acids and free tRNA molecules, this enzyme counteracts the toxicity associated with the formation of D-aminoacyl-tRNA entities in vivo and helps enforce protein L-homochirality. In Methylacidiphilum infernorum (isolate V4) (Methylokorus infernorum (strain V4)), this protein is D-aminoacyl-tRNA deacylase.